The chain runs to 603 residues: Shugoshin (603 aa).

A coiled-coil region spans residues 11–74 (HIQELQNILD…NVQLRSQVSL (64 aa)). 2 disordered regions span residues 112–164 (ESLP…RSST) and 201–227 (NEID…SNRR). 2 stretches are compositionally biased toward low complexity: residues 146 to 157 (SVSTGSAHSTSS) and 201 to 214 (NEID…DNLL). Positions 218 to 227 (PHKKRKSNRR) are enriched in basic residues. A coiled-coil region spans residues 304–325 (KQDILDETEKRDTAVNQKKKLE). The interval 331–399 (PVEELSSSKN…ESVDFDRPRR (69 aa)) is disordered. Residues 362-376 (KVKHSMKSRKPKKNK) are compositionally biased toward basic residues. Residues 431–451 (NIQDLQVKYKKSKKVLEKELK) adopt a coiled-coil conformation. Residues 455-467 (KAMKSPKKNEKTF) show a composition bias toward basic and acidic residues. Disordered stretches follow at residues 455–519 (KAMK…HSSF) and 583–603 (HNDT…KNKA). A compositionally biased stretch (low complexity) spans 483–512 (RPSSTHSTSSVDAECSHNNSHSENINSSIN). The segment covering 583–593 (HNDTNKSSPKT) has biased composition (polar residues). The span at 594–603 (YRSRSRKNKA) shows a compositional bias: basic residues.

This sequence belongs to the shugoshin family.

The protein localises to the nucleus. The protein resides in the chromosome. It localises to the centromere. In terms of biological role, plays a central role in chromosome cohesion during cell division by preventing premature dissociation of cohesin complex from centromeres after prophase, when most of cohesin complex dissociates from chromosomes arms. This Candida glabrata (strain ATCC 2001 / BCRC 20586 / JCM 3761 / NBRC 0622 / NRRL Y-65 / CBS 138) (Yeast) protein is Shugoshin (SGO1).